The primary structure comprises 4518 residues: Dynein axonemal heavy chain 11 (4518 aa).

Positions 1 to 1857 are stem; it reads MAASVAAQEA…LVHICDAQFQ (1857 aa). 4 AAA regions span residues 1858-2079, 2139-2368, 2474-2721, and 2819-3068; these read YFYE…VLVV, QMVR…TSFK, TMDP…VFQG, and NYND…EGRH. ATP contacts are provided by residues 1896 to 1903, 2177 to 2184, 2512 to 2519, and 2857 to 2864; these read GPAGTGKT, GNAGTGKS, GNAGVGKT, and GVGGSGKQ. A stalk region spans residues 3074 to 3405; the sequence is KSFLEQISLF…GQSIKSFEAQ (332 aa). A coiled-coil region spans residues 3322-3391; it reads LAQANLELAT…NRLVKELEVK (70 aa). AAA regions lie at residues 3461–3688 and 3898–4124; these read LTDD…EIER and LRNF…VLYN.

Belongs to the dynein heavy chain family. Consists of at least two heavy chains and a number of intermediate and light chains. Interacts with CFAP45.

The protein localises to the cytoplasm. Its subcellular location is the cytoskeleton. It is found in the cilium axoneme. In terms of biological role, force generating protein of respiratory cilia. Produces force towards the minus ends of microtubules. Dynein has ATPase activity; the force-producing power stroke is thought to occur on release of ADP. The sequence is that of Dynein axonemal heavy chain 11 (DNAH11) from Sus scrofa (Pig).